A 215-amino-acid chain; its full sequence is Large ribosomal subunit protein uL1 (215 aa).

The protein belongs to the universal ribosomal protein uL1 family. Part of the 50S ribosomal subunit.

Binds directly to 23S rRNA. Probably involved in E site tRNA release. Its function is as follows. Protein L1 is also a translational repressor protein, it controls the translation of its operon by binding to its mRNA. This Methanospirillum hungatei JF-1 (strain ATCC 27890 / DSM 864 / NBRC 100397 / JF-1) protein is Large ribosomal subunit protein uL1.